The chain runs to 337 residues: Regulator of RpoS (337 aa).

Residues 9 to 123 form the Response regulatory domain; sequence QILIVEDEQV…NRLREMVFAC (115 aa). A 4-aspartylphosphate modification is found at Asp58.

It belongs to the RssB family. As to quaternary structure, binds to RpoS. Phosphorylated. Phosphorylation stimulates the interaction with RpoS and, therefore, the proteolysis of RpoS.

Functionally, regulates the turnover of the sigma S factor (RpoS) by promoting its proteolysis in exponentially growing cells. Acts by binding and delivering RpoS to the ClpXP protease. RssB is not co-degraded with RpoS, but is released from the complex and can initiate a new cycle of RpoS recognition and degradation. The sequence is that of Regulator of RpoS from Shigella flexneri.